A 38-amino-acid polypeptide reads, in one-letter code: Small ribosomal subunit protein eS32 (38 aa).

Belongs to the eukaryotic ribosomal protein eS32 family. In terms of assembly, component of the small ribosomal subunit (SSU).

This chain is Small ribosomal subunit protein eS32 (rpl41e), found in Methanocaldococcus jannaschii (strain ATCC 43067 / DSM 2661 / JAL-1 / JCM 10045 / NBRC 100440) (Methanococcus jannaschii).